A 103-amino-acid chain; its full sequence is Large ribosomal subunit protein uL23c (103 aa).

The protein belongs to the universal ribosomal protein uL23 family. Part of the 50S ribosomal subunit.

It localises to the plastid. The protein localises to the chloroplast. Binds to 23S rRNA. The sequence is that of Large ribosomal subunit protein uL23c (rpl23) from Gracilaria tenuistipitata var. liui (Red alga).